We begin with the raw amino-acid sequence, 252 residues long: Triosephosphate isomerase (252 aa).

A substrate-binding site is contributed by 9–11 (NWK). The Electrophile role is filled by histidine 98. Glutamate 170 acts as the Proton acceptor in catalysis. The substrate site is built by glycine 176 and serine 215.

This sequence belongs to the triosephosphate isomerase family. As to quaternary structure, homodimer.

Its subcellular location is the cytoplasm. It carries out the reaction D-glyceraldehyde 3-phosphate = dihydroxyacetone phosphate. Its pathway is carbohydrate biosynthesis; gluconeogenesis. It participates in carbohydrate degradation; glycolysis; D-glyceraldehyde 3-phosphate from glycerone phosphate: step 1/1. Involved in the gluconeogenesis. Catalyzes stereospecifically the conversion of dihydroxyacetone phosphate (DHAP) to D-glyceraldehyde-3-phosphate (G3P). The sequence is that of Triosephosphate isomerase from Buchnera aphidicola subsp. Baizongia pistaciae (strain Bp).